A 485-amino-acid chain; its full sequence is Aspartyl/glutamyl-tRNA(Asn/Gln) amidotransferase subunit B (485 aa).

This sequence belongs to the GatB/GatE family. GatB subfamily. In terms of assembly, heterotrimer of A, B and C subunits.

It carries out the reaction L-glutamyl-tRNA(Gln) + L-glutamine + ATP + H2O = L-glutaminyl-tRNA(Gln) + L-glutamate + ADP + phosphate + H(+). The enzyme catalyses L-aspartyl-tRNA(Asn) + L-glutamine + ATP + H2O = L-asparaginyl-tRNA(Asn) + L-glutamate + ADP + phosphate + 2 H(+). Its function is as follows. Allows the formation of correctly charged Asn-tRNA(Asn) or Gln-tRNA(Gln) through the transamidation of misacylated Asp-tRNA(Asn) or Glu-tRNA(Gln) in organisms which lack either or both of asparaginyl-tRNA or glutaminyl-tRNA synthetases. The reaction takes place in the presence of glutamine and ATP through an activated phospho-Asp-tRNA(Asn) or phospho-Glu-tRNA(Gln). This is Aspartyl/glutamyl-tRNA(Asn/Gln) amidotransferase subunit B from Borrelia hermsii (strain HS1 / DAH).